Here is a 174-residue protein sequence, read N- to C-terminus: Small ribosomal subunit protein uS5 (174 aa).

The region spanning 20–83 (IEDQLVAINR…EAGKKRMIKV (64 aa)) is the S5 DRBM domain.

The protein belongs to the universal ribosomal protein uS5 family. Part of the 30S ribosomal subunit. Contacts proteins S4 and S8.

Functionally, with S4 and S12 plays an important role in translational accuracy. In terms of biological role, located at the back of the 30S subunit body where it stabilizes the conformation of the head with respect to the body. The sequence is that of Small ribosomal subunit protein uS5 from Lactobacillus gasseri (strain ATCC 33323 / DSM 20243 / BCRC 14619 / CIP 102991 / JCM 1131 / KCTC 3163 / NCIMB 11718 / NCTC 13722 / AM63).